The sequence spans 173 residues: Photosystem I assembly protein Ycf3 (173 aa).

3 TPR repeats span residues Ala-35–Pro-68, Ser-72–Gln-105, and Gly-120–Gly-153.

It belongs to the Ycf3 family.

It is found in the cellular thylakoid membrane. Its function is as follows. Essential for the assembly of the photosystem I (PSI) complex. May act as a chaperone-like factor to guide the assembly of the PSI subunits. This Prochlorococcus marinus (strain MIT 9303) protein is Photosystem I assembly protein Ycf3.